Here is a 215-residue protein sequence, read N- to C-terminus: Cytochrome b6 (215 aa).

The helical transmembrane segment at 32–52 (IFYCLGGITLTCFLIQFATGF) threads the bilayer. Heme c is bound at residue Cys35. The heme b site is built by His86 and His100. The next 3 membrane-spanning stretches (helical) occupy residues 90–110 (ASMMVLMMILHVFRVYLTGGF), 116–136 (LTWVTGVVLAVITVSFGVTGY), and 186–206 (LHTFVLPWSIAVFMLMHFLMI). Heme b contacts are provided by His187 and His202.

This sequence belongs to the cytochrome b family. PetB subfamily. The 4 large subunits of the cytochrome b6-f complex are cytochrome b6, subunit IV (17 kDa polypeptide, PetD), cytochrome f and the Rieske protein, while the 4 small subunits are PetG, PetL, PetM and PetN. The complex functions as a dimer. Requires heme b as cofactor. The cofactor is heme c.

The protein localises to the cellular thylakoid membrane. Functionally, component of the cytochrome b6-f complex, which mediates electron transfer between photosystem II (PSII) and photosystem I (PSI), cyclic electron flow around PSI, and state transitions. This is Cytochrome b6 from Synechococcus elongatus.